The chain runs to 262 residues: 3-methyl-2-oxobutanoate hydroxymethyltransferase (262 aa).

Mg(2+) is bound by residues Asp42 and Asp81. 3-methyl-2-oxobutanoate-binding positions include 42-43 (DS), Asp81, and Lys110. Residue Glu112 participates in Mg(2+) binding. Catalysis depends on Glu180, which acts as the Proton acceptor.

It belongs to the PanB family. In terms of assembly, homodecamer; pentamer of dimers. Mg(2+) is required as a cofactor.

Its subcellular location is the cytoplasm. It carries out the reaction 3-methyl-2-oxobutanoate + (6R)-5,10-methylene-5,6,7,8-tetrahydrofolate + H2O = 2-dehydropantoate + (6S)-5,6,7,8-tetrahydrofolate. It participates in cofactor biosynthesis; (R)-pantothenate biosynthesis; (R)-pantoate from 3-methyl-2-oxobutanoate: step 1/2. Catalyzes the reversible reaction in which hydroxymethyl group from 5,10-methylenetetrahydrofolate is transferred onto alpha-ketoisovalerate to form ketopantoate. The polypeptide is 3-methyl-2-oxobutanoate hydroxymethyltransferase (Legionella pneumophila subsp. pneumophila (strain Philadelphia 1 / ATCC 33152 / DSM 7513)).